We begin with the raw amino-acid sequence, 208 residues long: 3-demethoxyubiquinol 3-hydroxylase (208 aa).

Residues E57, E87, H90, E139, E171, and H174 each contribute to the Fe cation site.

It belongs to the COQ7 family. It depends on Fe cation as a cofactor.

It is found in the cell membrane. The enzyme catalyses a 5-methoxy-2-methyl-3-(all-trans-polyprenyl)benzene-1,4-diol + AH2 + O2 = a 3-demethylubiquinol + A + H2O. It participates in cofactor biosynthesis; ubiquinone biosynthesis. In terms of biological role, catalyzes the hydroxylation of 2-nonaprenyl-3-methyl-6-methoxy-1,4-benzoquinol during ubiquinone biosynthesis. This chain is 3-demethoxyubiquinol 3-hydroxylase, found in Nitrosomonas europaea (strain ATCC 19718 / CIP 103999 / KCTC 2705 / NBRC 14298).